We begin with the raw amino-acid sequence, 207 residues long: Large ribosomal subunit protein uL4 (207 aa).

The interval 53–85 (ERSDVARTGKKFGRQKGGGTARHGDRKAPIFIG) is disordered.

This sequence belongs to the universal ribosomal protein uL4 family. In terms of assembly, part of the 50S ribosomal subunit.

In terms of biological role, one of the primary rRNA binding proteins, this protein initially binds near the 5'-end of the 23S rRNA. It is important during the early stages of 50S assembly. It makes multiple contacts with different domains of the 23S rRNA in the assembled 50S subunit and ribosome. Functionally, forms part of the polypeptide exit tunnel. The polypeptide is Large ribosomal subunit protein uL4 (Novosphingobium aromaticivorans (strain ATCC 700278 / DSM 12444 / CCUG 56034 / CIP 105152 / NBRC 16084 / F199)).